The primary structure comprises 380 residues: Cytochrome b (380 aa).

A run of 4 helical transmembrane segments spans residues 34-54 (FGSL…LLAT), 78-99 (WLIR…YLHI), 114-134 (WNTG…GYVL), and 179-199 (FFAL…THLT). Residues His-84 and His-98 each coordinate heme b. His-183 and His-197 together coordinate heme b. His-202 serves as a coordination point for a ubiquinone. 4 consecutive transmembrane segments (helical) span residues 227-247 (PKDL…ALFS), 289-309 (LGGV…PFLH), 321-341 (LSQL…WVGS), and 348-368 (FIII…ILFP).

Belongs to the cytochrome b family. In terms of assembly, the cytochrome bc1 complex contains 11 subunits: 3 respiratory subunits (MT-CYB, CYC1 and UQCRFS1), 2 core proteins (UQCRC1 and UQCRC2) and 6 low-molecular weight proteins (UQCRH/QCR6, UQCRB/QCR7, UQCRQ/QCR8, UQCR10/QCR9, UQCR11/QCR10 and a cleavage product of UQCRFS1). This cytochrome bc1 complex then forms a dimer. Heme b serves as cofactor.

It localises to the mitochondrion inner membrane. Component of the ubiquinol-cytochrome c reductase complex (complex III or cytochrome b-c1 complex) that is part of the mitochondrial respiratory chain. The b-c1 complex mediates electron transfer from ubiquinol to cytochrome c. Contributes to the generation of a proton gradient across the mitochondrial membrane that is then used for ATP synthesis. The polypeptide is Cytochrome b (MT-CYB) (Todus todus (Jamaican tody)).